The chain runs to 1854 residues: Immunoglobulin A1 protease (1854 aa).

Residues 1-37 (MKKFLGEKQTRFAFRKLAVGLVSAAISSLFFVSIVGV) form the signal peptide. Residues 38–99 (DSVQAQEKLN…NAGAKTLPNT (62 aa)) constitute a propeptide that is removed on maturation. Residues 96 to 100 (LPNTG) carry the LPXTG sorting signal motif. At threonine 99 the chain carries Pentaglycyl murein peptidoglycan amidated threonine. The next 2 membrane-spanning stretches (helical) occupy residues 106–125 (TMMAAGLLLTTIGLVVFAVS) and 132–154 (KFLLTVLVGASVGGGLILSVDAL). Over 155 to 1854 (ENGSLLQYNA…FRKSIFENQK (1700 aa)) the chain is Extracellular. The 80-residue stretch at 256 to 335 (KPELLYKETS…PKIVEKGTKK (80 aa)) folds into the G5 domain. Tandem repeats lie at residues 349-368 (VQPEQVAPLPEYTGVQSGAI), 369-388 (VEPEQVASLPEYSGTLSGAI), 389-406 (VEPEQIEPEIGGVQSGAI), 407-426 (VEPEQVTPLPEYTGTQAGAV), 427-446 (VSPEQVAPLPEYTGTQSGAI), 447-466 (VEPAQVTPLPEYTGVQSGAI), 467-486 (VKPAQVTPLPEYTGTQSGAI), 487-506 (VEPEQVTPSPEYTGVQAGAI), 507-526 (VEPEQVASLPEYTGSQAGAI), and 527-546 (VEPEQVEPPQEYTGNIEPAA). The interval 349–546 (VQPEQVAPLP…EYTGNIEPAA (198 aa)) is 10 X 20 AA approximate tandem repeats. The segment covering 533 to 550 (EPPQEYTGNIEPAAPEAE) has biased composition (low complexity). Residues 533–570 (EPPQEYTGNIEPAAPEAENPTEKAQEPKEQKQEPEKNI) are disordered. Basic and acidic residues predominate over residues 552 to 570 (PTEKAQEPKEQKQEPEKNI). Zn(2+) is bound at residue histidine 1494. Glutamate 1495 is a catalytic residue. Positions 1498 and 1518 each coordinate Zn(2+).

This sequence belongs to the peptidase M26 family. Zn(2+) is required as a cofactor. In terms of processing, the Gram-positive cell-wall anchor motif LPXTG is located in the N-terminal part, in contrast to such motifs in other known streptococcal and staphylococcal proteins. The protease could be cleaved by the sortase and anchored in the membrane via the two potential N-terminal transmembrane domains, whereas the propeptide located prior to the LPXTG motif would remain attached to the cell wall peptidoglycan by an amide bond.

The protein resides in the secreted. Its subcellular location is the cell wall. It localises to the membrane. The enzyme catalyses Cleavage of Pro-|-Thr bond in the hinge region of the heavy chain of human IgA.. Inhibited by EDTA. In terms of biological role, zinc metalloproteinase which cleaves human immunoglobulin A1 (IgA1) in the hinge region. This chain is Immunoglobulin A1 protease (iga), found in Streptococcus sanguinis.